We begin with the raw amino-acid sequence, 193 residues long: Dual-action ribosomal maturation protein DarP (193 aa).

The segment covering 1–10 has biased composition (basic and acidic residues); sequence MRGRDEDTGE. Disordered regions lie at residues 1 to 20 and 171 to 193; these read MRGR…SQQR and QEQG…EDDE. The span at 181-193 shows a compositional bias: acidic residues; sequence GLEDGESALEDDE.

It belongs to the DarP family.

The protein localises to the cytoplasm. Functionally, member of a network of 50S ribosomal subunit biogenesis factors which assembles along the 30S-50S interface, preventing incorrect 23S rRNA structures from forming. Promotes peptidyl transferase center (PTC) maturation. This is Dual-action ribosomal maturation protein DarP from Xanthomonas oryzae pv. oryzae (strain KACC10331 / KXO85).